The chain runs to 914 residues: MNLTLTRRLWMGFALMALLTLTSTLVGWYNLRFISQVEKDNTQALIPTMNMARQLSEASAWELFAAQNLTSADNEKMWQAQGRMLTAQSLKINALLQALREQGFDTTAIEQQEQEISRSLRQQGELVGQRLQLRQQQQQLSQQIVAAADEIARLAQGQANNATTSAGATQAGIYDLIEQDQRQAAESALDRLIDIDLEYVNQMNELRLSALRVQQMVMNLGLEQIQKNAPTLEKQLNNAVKILQRRQIRIEDPGVRAQVATTLTTVSQYSDLLALYQQDSEISNHLQTLAQNNIAQFAQFSSEVSQLVDTIELRNQHGLAHLEKASARGQYSLLLLGMVSLCALILILWRVVYRSVTRPLAEQTQALQRLLDGDIDSPFPETAGVRELDTIGRLMDAFRSNVHALNRHREQLAAQVKARTAELQELVIEHRQARAEAEKASQAKSAFLAAMSHEIRTPLYGILGTAQLLADNPALNAQRDDLRAITDSGESLLTILNDILDYSAIEAGGKNVSVSDEPFEPRPLLESTLQLMSGRVKGRPIRLATAIADDMPCALMGDPRRIRQVITNLLSNALRFTDEGYIILRSRTDGEQWLVEVEDSGCGIDPAKLAEIFQPFVQVSGKRGGTGLGLTISSRLAQAMGGELSATSTPEVGSCFCLRLPLRVATAPVPKTVNQAVRLDGLRLLLIEDNPLTQRITIEMLKTSGAQIVAVGNAAQALETLQNSEPFAAALVDFDLPDIDGITLARQLAQQYPSLVLIGFSAHVIDETLRQRTSSLFRGIIPKPVPREVLGQLLAHYLQLQVNNDQSLDVSQLNEDAQLMGTEKIHEWLVLFTQHALPLLDEIDIARASQDSEKIKRAAHQLKSSCSSLGMHIASQLCAQLEQQPLSAPLPHEEITRSVAALEAWLHKKDLNAI.

Topologically, residues 1-8 are cytoplasmic; the sequence is MNLTLTRR. A helical membrane pass occupies residues 9–29; the sequence is LWMGFALMALLTLTSTLVGWY. Topologically, residues 30 to 332 are periplasmic; the sequence is NLRFISQVEK…EKASARGQYS (303 aa). The helical transmembrane segment at 333-353 threads the bilayer; that stretch reads LLLLGMVSLCALILILWRVVY. The region spanning 354–407 is the HAMP domain; it reads RSVTRPLAEQTQALQRLLDGDIDSPFPETAGVRELDTIGRLMDAFRSNVHALNR. At 354-914 the chain is on the cytoplasmic side; sequence RSVTRPLAEQ…WLHKKDLNAI (561 aa). Residues 450-664 form the Histidine kinase domain; that stretch reads AMSHEIRTPL…CFCLRLPLRV (215 aa). The residue at position 453 (His-453) is a Phosphohistidine; by autocatalysis. Residues 683–798 form the Response regulatory domain; that stretch reads RLLLIEDNPL…VLGQLLAHYL (116 aa). Position 733 is a 4-aspartylphosphate (Asp-733). The 94-residue stretch at 821 to 914 folds into the HPt domain; it reads GTEKIHEWLV…WLHKKDLNAI (94 aa). A Phosphohistidine modification is found at His-860.

May form homomultimers. Seems to interact with TorT and TorC apocytochrome. Activation requires a sequential transfer of a phosphate group from a His in the primary transmitter domain, to an Asp in the receiver domain and to a His in the secondary transmitter domain.

The protein localises to the cell inner membrane. It carries out the reaction ATP + protein L-histidine = ADP + protein N-phospho-L-histidine.. With respect to regulation, inhibited by TorC apocytochrome. Its function is as follows. Member of the two-component regulatory system TorS/TorR involved in the anaerobic utilization of trimethylamine-N-oxide (TMAO). Detects the presence of TMAO in the medium and, in response, activates TorR via a four-step phosphorelay. When TMAO is removed, TorS can dephosphorylate TorR, probably by a reverse phosphorelay involving His-860 and Asp-733. The chain is Sensor protein TorS (torS) from Escherichia coli (strain K12).